The primary structure comprises 1074 residues: DNA helicase B (1074 aa).

3 disordered regions span residues 1-38 (MARQ…EEEF), 380-420 (GAKP…HVRS), and 932-1014 (GSCA…FDEE). Positions 20-38 (DDEEEDCAQEEEGEQEEEF) are enriched in acidic residues. Residues 934–946 (CAPSTGFASQPSS) are compositionally biased toward polar residues. A phosphoserine mark is found at S942 and S946. Position 992 is a phosphothreonine (T992). 2 positions are modified to phosphoserine: S1015 and S1026. The Nuclear export signal signature appears at 1022–1046 (VEAPSPQVSSVFQNMRLNTLTPRQL). Residues 1040–1074 (TLTPRQLFKPTDNQDTGTAGVADDANDPSNQEMEM) form a disordered region.

The protein belongs to the RecD family. HELB subfamily. As to quaternary structure, binds to RPA1; this interaction promotes HELB recruitment to chromatin following DNA damage. Interacts with at least two subunits of the DNA polymerase alpha complex. Interacts with CDC45. Interacts with TOPB1. Post-translationally, phosphorylated at Ser-942 by CDK2 during the G1/S transition, resulting in its nuclear export into the cytoplasm. As S phase progresses, its exclusion from the nucleus promotes the activation of long-range resection.

The protein localises to the nucleus. Its subcellular location is the cytoplasm. The protein resides in the chromosome. It catalyses the reaction ATP + H2O = ADP + phosphate + H(+). Functionally, 5'-3' DNA helicase involved in DNA damage response by acting as an inhibitor of DNA end resection. Recruitment to single-stranded DNA (ssDNA) following DNA damage leads to inhibit the nucleases catalyzing resection, such as EXO1, BLM and DNA2, possibly via the 5'-3' ssDNA translocase activity of HELB. As cells approach S phase, DNA end resection is promoted by the nuclear export of HELB following phosphorylation. Acts independently of TP53BP1. Unwinds duplex DNA with 5'-3' polarity. Has single-strand DNA-dependent ATPase and DNA helicase activities. Prefers ATP and dATP as substrates. During S phase, may facilitate cellular recovery from replication stress. This Mus musculus (Mouse) protein is DNA helicase B.